The sequence spans 579 residues: Thiol:disulfide interchange protein DsbD (579 aa).

The first 16 residues, 1–16 (MKKLFLFFTLIFTAFA), serve as a signal peptide directing secretion. 2 disulfide bridges follow: Cys124–Cys129 and Cys193–Cys315. 8 consecutive transmembrane segments (helical) span residues 178–198 (IFGF…LPML), 230–250 (LTYT…QIAL), 254–274 (YVMI…FGLF), 296–316 (GAFG…SPCT), 337–357 (AATL…ITLF), 376–396 (FGFV…PEVW), 397–417 (EPRL…LQMS), and 420–440 (GFGY…VQPL). One can recognise a Thioredoxin domain in the interval 449-579 (TTTQSAVENM…AFSNWLKALH (131 aa)). Cys495 and Cys498 are oxidised to a cystine.

The protein belongs to the thioredoxin family. DsbD subfamily.

It is found in the cell inner membrane. The enzyme catalyses [protein]-dithiol + NAD(+) = [protein]-disulfide + NADH + H(+). The catalysed reaction is [protein]-dithiol + NADP(+) = [protein]-disulfide + NADPH + H(+). Its function is as follows. Required to facilitate the formation of correct disulfide bonds in some periplasmic proteins and for the assembly of the periplasmic c-type cytochromes. Acts by transferring electrons from cytoplasmic thioredoxin to the periplasm. This transfer involves a cascade of disulfide bond formation and reduction steps. The sequence is that of Thiol:disulfide interchange protein DsbD from Haemophilus influenzae (strain 86-028NP).